The chain runs to 106 residues: MMKLIVVFVISSLLFATQFSNGDELESQAQAPAIHKNGGEGSLKPEECPKACEYRCSATSHRKPCLFFCNKCCNKCLCVPSGTYGHKEECPCYNNWTTKEGGPKCP.

Positions 1–22 (MMKLIVVFVISSLLFATQFSNG) are cleaved as a signal peptide.

It belongs to the GASA family. Six disulfide bonds may be present.

Its subcellular location is the secreted. Functionally, gibberellin-regulated protein that may function in hormonal controlled steps of development such as seed germination, flowering and seed maturation. This is Gibberellin-regulated protein 12 (GASA12) from Arabidopsis thaliana (Mouse-ear cress).